The following is an 81-amino-acid chain: Putative defensin-like protein 148 (81 aa).

The N-terminal stretch at 1–24 (MIKSFQLSFTVLIVFTVLILGVVG) is a signal peptide. 4 cysteine pairs are disulfide-bonded: cysteine 34–cysteine 80, cysteine 43–cysteine 63, cysteine 48–cysteine 74, and cysteine 52–cysteine 76.

It belongs to the DEFL family.

Its subcellular location is the secreted. The chain is Putative defensin-like protein 148 (LCR4) from Arabidopsis thaliana (Mouse-ear cress).